The chain runs to 261 residues: Syntaxin-7 (261 aa).

Residue Ser-2 is modified to N-acetylserine. Over 2 to 238 the chain is Cytoplasmic; the sequence is SYTPGVGGDP…DYQRKSRKTL (237 aa). Thr-4 is subject to Phosphothreonine. Ser-45 is modified (phosphoserine). Residues 47 to 69 are a coiled coil; the sequence is ELRQQLQQKQQYTNQLAKETDKY. At Ser-75 the chain carries Phosphoserine. Phosphothreonine is present on Thr-79. Residues Ser-125, Ser-126, Ser-129, and Ser-205 each carry the phosphoserine modification. Residues 129–148 form a disordered region; the sequence is SGSFPEDSSKERNLVSWESQ. Residues 165-227 enclose the t-SNARE coiled-coil homology domain; the sequence is LRLIHERESS…QQANQQLSRA (63 aa). Residues 239-259 traverse the membrane as a helical; Anchor for type IV membrane protein segment; that stretch reads CIIILILVIGVAIISLIIWGL. The Vesicular segment spans residues 260 to 261; it reads NH.

The protein belongs to the syntaxin family. In terms of assembly, forms a SNARE complex with VTI1B, STX8 and VAMP8 which functions in the homotypic fusion of late endosomes. Component of the SNARE complex composed of STX7, STX8, VAMP7 and VTI1B that is required for heterotypic fusion of late endosomes with lysosomes. Interacts with VPS11, VPS16 and VPS18. Interacts with VPS33A. Interacts with TPC1. In terms of tissue distribution, highest expression is found in placenta followed by heart, skeletal muscle, kidney and brain. Low expression is found in pancreas, lung and liver.

It localises to the early endosome membrane. Its function is as follows. May be involved in protein trafficking from the plasma membrane to the early endosome (EE) as well as in homotypic fusion of endocytic organelles. Mediates the endocytic trafficking from early endosomes to late endosomes and lysosomes. The polypeptide is Syntaxin-7 (STX7) (Homo sapiens (Human)).